Reading from the N-terminus, the 180-residue chain is ATP-dependent protease subunit HslV (180 aa).

The active site involves Thr-6. Residues Ala-164, Cys-167, and Thr-170 each coordinate Na(+).

Belongs to the peptidase T1B family. HslV subfamily. In terms of assembly, a double ring-shaped homohexamer of HslV is capped on each side by a ring-shaped HslU homohexamer. The assembly of the HslU/HslV complex is dependent on binding of ATP.

It localises to the cytoplasm. It carries out the reaction ATP-dependent cleavage of peptide bonds with broad specificity.. Allosterically activated by HslU binding. Protease subunit of a proteasome-like degradation complex believed to be a general protein degrading machinery. The protein is ATP-dependent protease subunit HslV of Borrelia turicatae (strain 91E135).